A 289-amino-acid chain; its full sequence is NAD(P)H-hydrate epimerase (289 aa).

The YjeF N-terminal domain occupies 71 to 277; the sequence is AQTIDNELMS…SIVEKYNLKV (207 aa). A (6S)-NADPHX-binding site is contributed by 122–126; sequence NNGGD. The K(+) site is built by Asn123 and Asp185. (6S)-NADPHX is bound by residues 189–195 and Asp218; that span reads GFSFTGE. Ser221 contributes to the K(+) binding site.

Belongs to the NnrE/AIBP family. Requires K(+) as cofactor.

It catalyses the reaction (6R)-NADHX = (6S)-NADHX. The enzyme catalyses (6R)-NADPHX = (6S)-NADPHX. In terms of biological role, catalyzes the epimerization of the S- and R-forms of NAD(P)HX, a damaged form of NAD(P)H that is a result of enzymatic or heat-dependent hydration. This is a prerequisite for the S-specific NAD(P)H-hydrate dehydratase to allow the repair of both epimers of NAD(P)HX. This Plasmodium vivax (strain Salvador I) protein is NAD(P)H-hydrate epimerase.